Reading from the N-terminus, the 137-residue chain is Small ribosomal subunit protein uS9 (137 aa).

Residues 106 to 117 (KTEGYLTRDPRA) are compositionally biased toward basic and acidic residues. The disordered stretch occupies residues 106–137 (KTEGYLTRDPRAKERRKYGLRKARKAPQYSKR). Residues 118–137 (KERRKYGLRKARKAPQYSKR) show a composition bias toward basic residues.

This sequence belongs to the universal ribosomal protein uS9 family.

The polypeptide is Small ribosomal subunit protein uS9 (Thermosynechococcus vestitus (strain NIES-2133 / IAM M-273 / BP-1)).